The following is a 1234-amino-acid chain: Formin-like protein 3 (1234 aa).

Positions 1-208 constitute a Phosphatase tensin-type domain; the sequence is MRLDSFPASI…QYVARRNISP (208 aa). Cys-141 serves as the catalytic Phosphocysteine intermediate. The C2 tensin-type domain occupies 214–352; sequence ERALSFDCLI…FRAEMLFCEL (139 aa). Disordered regions lie at residues 443–478 and 492–840; these read DSDE…NINH and LVNT…LKPL. The segment covering 498–507 has biased composition (pro residues); sequence VLPPTTPPPC. Residues 524–534 are compositionally biased toward basic and acidic residues; the sequence is VQHESPSDRKL. Pro residues-rich tracts occupy residues 536–576, 584–656, 663–673, 688–699, 709–721, 729–739, and 762–784; these read SPSP…PPLP, QPPP…PPAP, PAPPPPPPPPR, GPPPPPPPPLPP, PSAP…PPPA, APAPPLPPPLP, and PAPP…PPPL. The FH2 domain maps to 827–1226; the sequence is QQSNPPKKAS…KLEKDKEKAT (400 aa).

The protein belongs to the formin-like family. Class-II subfamily.

The chain is Formin-like protein 3 (FH3) from Oryza sativa subsp. japonica (Rice).